The primary structure comprises 35 residues: Photosystem II reaction center protein M (35 aa).

A helical transmembrane segment spans residues 5–25 (ILAFIATALFILVPTAFLLII).

It belongs to the PsbM family. PSII is composed of 1 copy each of membrane proteins PsbA, PsbB, PsbC, PsbD, PsbE, PsbF, PsbH, PsbI, PsbJ, PsbK, PsbL, PsbM, PsbT, PsbX, PsbY, PsbZ, Psb30/Ycf12, at least 3 peripheral proteins of the oxygen-evolving complex and a large number of cofactors. It forms dimeric complexes.

It is found in the plastid. The protein localises to the chloroplast thylakoid membrane. In terms of biological role, one of the components of the core complex of photosystem II (PSII). PSII is a light-driven water:plastoquinone oxidoreductase that uses light energy to abstract electrons from H(2)O, generating O(2) and a proton gradient subsequently used for ATP formation. It consists of a core antenna complex that captures photons, and an electron transfer chain that converts photonic excitation into a charge separation. This subunit is found at the monomer-monomer interface. The sequence is that of Photosystem II reaction center protein M from Panax quinquefolius (American ginseng).